The chain runs to 895 residues: Androgen receptor (895 aa).

The modulating stretch occupies residues 1–533 (MEVQLGLGRV…PIDYYFPPQK (533 aa)). An interaction with ZNF318 region spans residues 1 to 562 (MEVQLGLGRV…GSCKVFFKRA (562 aa)). Disordered stretches follow at residues 33–150 (VIQN…LSLL) and 175–211 (QLLQ…YLGG). Composition is skewed to low complexity over residues 44–81 (AASA…GSPQ) and 175–200 (QLLQ…ASGA). Serine 65 carries the phosphoserine; by CDK9 modification. Residue serine 79 is modified to Phosphoserine. A compositionally biased stretch (polar residues) spans 201 to 211 (PTSSKDNYLGG). Tyrosine 208 carries the phosphotyrosine; by CSK modification. At serine 241 the chain carries Phosphoserine. Phosphotyrosine; by CSK and TNK2 is present on tyrosine 252. 4 positions are modified to phosphotyrosine; by CSK: tyrosine 292, tyrosine 331, tyrosine 342, and tyrosine 347. Residue tyrosine 348 is modified to Phosphotyrosine; by CSK and TNK2. A Glycyl lysine isopeptide (Lys-Gly) (interchain with G-Cter in SUMO) cross-link involves residue lysine 371. At tyrosine 378 the chain carries Phosphotyrosine; by CSK. A Glycyl lysine isopeptide (Lys-Gly) (interchain with G-Cter in SUMO) cross-link involves residue lysine 496. Residues tyrosine 510 and tyrosine 527 each carry the phosphotyrosine; by CSK modification. Residues 527–894 (YYFPPQKTCL…GKVKPIYFHT (368 aa)) form an interaction with LPXN region. Positions 534-607 (TCLICGDEAS…AGMTLGARKL (74 aa)) form a DNA-binding region, nuclear receptor. 2 consecutive NR C4-type zinc fingers follow at residues 535–555 (CLIC…CGSC) and 571–595 (CASR…LRKC). The interval 547–637 (YGALTCGSCK…TEETAQKLTV (91 aa)) is interaction with HIPK3. Residues 567-894 (QKYLCASRND…GKVKPIYFHT (328 aa)) are interaction with CCAR1. An interaction with KAT7 region spans residues 600 to 894 (MTLGARKLKK…GKVKPIYFHT (295 aa)). Residue serine 626 is modified to Phosphoserine; by STK4/MST1. In terms of domain architecture, NR LBD spans 644–875 (ECQPIFLNVL…DFPEMMAEII (232 aa)). The 17beta-hydroxy-5alpha-androstan-3-one site is built by asparagine 681 and arginine 728. Glycyl lysine isopeptide (Lys-Gly) (interchain with G-Cter in ubiquitin) cross-links involve residues lysine 821 and lysine 823. Threonine 853 is a 17beta-hydroxy-5alpha-androstan-3-one binding site. Tyrosine 891 is modified (phosphotyrosine; by CSK).

Belongs to the nuclear hormone receptor family. NR3 subfamily. As to quaternary structure, binds DNA as a homodimer. Part of a ternary complex containing AR, EFCAB6/DJBP and PARK7. Interacts with HIPK3 and NR0B2 in the presence of androgen. The ligand binding domain interacts with KAT7/HBO1 in the presence of dihydrotestosterone. Interacts with EFCAB6/DJBP, PQBP1, RANBP9, RBAK, SPDEF, SRA1, TGFB1I1 and RREB1. Interacts with ZMIZ1/ZIMP10 and ZMIZ2/ZMIP7 which both enhance its transactivation activity. Interacts with SLC30A9 and RAD54L2/ARIP4. Interacts with MACROD1 (via macro domain). Interacts via the ligand-binding domain with LXXLL and FXXLF motifs from NCOA1, NCOA2, NCOA3 and MAGEA11. Interacts (via nuclear receptor DNA binding domain and nuclear receptor ligand binding domain) with NCOA4. The AR N-terminal poly-Gln region binds Ran resulting in enhancement of AR-mediated transactivation. Ran-binding decreases as the poly-Gln length increases. Interacts with HIP1 (via coiled coil domain). Interacts (via ligand-binding domain) with TRIM68. Interacts with TNK2. Interacts with USP26. Interacts with RNF6. Interacts (regulated by RNF6 probably through polyubiquitination) with RNF14; regulates AR transcriptional activity. Interacts with PRMT2 and TRIM24. Interacts with RACK1. Interacts with RANBP10; this interaction enhances dihydrotestosterone-induced AR transcriptional activity. Interacts with PRPF6 in a hormone-independent way; this interaction enhances dihydrotestosterone-induced AR transcriptional activity. Interacts with STK4/MST1. Interacts with ZIPK/DAPK3. Interacts with LPXN. Interacts with MAK. Part of a complex containing AR, MAK and NCOA3. Interacts with CRY1. Interacts with CCAR1 and GATA2. Interacts with ZNF318. Interacts with BUD31. Interacts with ARID4A. Interacts with ARID4B. Interacts (via NR LBD domain) with ZBTB7A; the interaction is direct and androgen-dependent. Interacts with NCOR1. Interacts with NCOR2. Interacts with CRY2 in a ligand-dependent manner. Phosphorylated in prostate cancer cells in response to several growth factors including EGF. Phosphorylation is induced by c-Src kinase (CSK). Tyr-510 is one of the major phosphorylation sites and an increase in phosphorylation and Src kinase activity is associated with prostate cancer progression. Phosphorylation by TNK2 enhances the DNA-binding and transcriptional activity. Phosphorylation at Ser-65 by CDK9 regulates AR promoter selectivity and cell growth. In terms of processing, sumoylated on Lys-371 (major) and Lys-496. Ubiquitinated. Deubiquitinated by USP26. 'Lys-6' and 'Lys-27'-linked polyubiquitination by RNF6 modulates AR transcriptional activity and specificity. Post-translationally, palmitoylated by ZDHHC7 and ZDHHC21. Palmitoylation is required for plasma membrane targeting and for rapid intracellular signaling via ERK and AKT kinases and cAMP generation.

It localises to the nucleus. Its subcellular location is the cytoplasm. Steroid hormone receptors are ligand-activated transcription factors that regulate eukaryotic gene expression and affect cellular proliferation and differentiation in target tissues. Transcription factor activity is modulated by bound coactivator and corepressor proteins like ZBTB7A that recruits NCOR1 and NCOR2 to the androgen response elements/ARE on target genes, negatively regulating androgen receptor signaling and androgen-induced cell proliferation. Transcription activation is also down-regulated by NR0B2. Activated, but not phosphorylated, by HIPK3 and ZIPK/DAPK3. The chain is Androgen receptor (AR) from Macaca fascicularis (Crab-eating macaque).